The primary structure comprises 436 residues: Chromosomal replication initiator protein DnaA (436 aa).

Positions 1–69 are domain I, interacts with DnaA modulators; that stretch reads MLADEVLELL…AHLFEVKTGT (69 aa). Residues 69-99 are domain II; sequence TKPNVEITTQTKLKSSKQNQVNIKQIKAQST. Residues 100–314 are domain III, AAA+ region; the sequence is LLNPAYTFEN…SAIINLNAYA (215 aa). The ATP site is built by G144, G146, K147, and T148. Residues 315 to 436 are domain IV, binds dsDNA; sequence NLMRQEITLD…ELKNKILTKG (122 aa).

It belongs to the DnaA family. As to quaternary structure, oligomerizes as a right-handed, spiral filament on DNA at oriC.

It is found in the cytoplasm. Functionally, plays an essential role in the initiation and regulation of chromosomal replication. ATP-DnaA binds to the origin of replication (oriC) to initiate formation of the DNA replication initiation complex once per cell cycle. Binds the DnaA box (a 9 base pair repeat at the origin) and separates the double-stranded (ds)DNA. Forms a right-handed helical filament on oriC DNA; dsDNA binds to the exterior of the filament while single-stranded (ss)DNA is stabiized in the filament's interior. The ATP-DnaA-oriC complex binds and stabilizes one strand of the AT-rich DNA unwinding element (DUE), permitting loading of DNA polymerase. After initiation quickly degrades to an ADP-DnaA complex that is not apt for DNA replication. Binds acidic phospholipids. The polypeptide is Chromosomal replication initiator protein DnaA (Campylobacter curvus (strain 525.92)).